The following is a 137-amino-acid chain: Large ribosomal subunit protein uL16c (137 aa).

The protein belongs to the universal ribosomal protein uL16 family. As to quaternary structure, part of the 50S ribosomal subunit.

The protein localises to the plastid. It is found in the chloroplast. This chain is Large ribosomal subunit protein uL16c, found in Bigelowiella natans (Pedinomonas minutissima).